Here is a 208-residue protein sequence, read N- to C-terminus: Golgi apparatus membrane protein TVP23 homolog B (208 aa).

At Met1 the chain carries N-acetylmethionine. Positions 1 to 21 (MLQQDSNDDTEDVSLFDAEEE) are enriched in acidic residues. A disordered region spans residues 1–27 (MLQQDSNDDTEDVSLFDAEEETTNRPK). The next 4 helical transmembrane spans lie at 34–53 (PVAS…VYLL), 54–72 (CELF…ILLL), 126–146 (IFWL…FSAL), and 152–172 (KWLA…YGYI).

Belongs to the TVP23 family.

It localises to the membrane. This is Golgi apparatus membrane protein TVP23 homolog B (TVP23B) from Bos taurus (Bovine).